The following is a 60-amino-acid chain: Beta-defensin 8 (60 aa).

The first 22 residues, 1–22 (MRIHYLLFTFLLVLLSPLAAFS), serve as a signal peptide directing secretion. The propeptide occupies 23–25 (QKI). Cystine bridges form between cysteine 31/cysteine 58, cysteine 38/cysteine 52, and cysteine 42/cysteine 59.

This sequence belongs to the beta-defensin family. Most highly expressed in testis and heart.

The protein localises to the secreted. Its function is as follows. A synthetic peptide displays antimicrobial activities against S.aureus, P.aeruginosa, E.coli and B.cepacia. The antimicrobial activity against S.aureus, E.coli and B.cepacia is reduced in raised concentration of NaCl, but its action against P.aeruginosa is independent of NaCl concentration. This chain is Beta-defensin 8 (Defb8), found in Mus musculus (Mouse).